The chain runs to 384 residues: MTWQQKIDDALTARRSADALRRRYAVTQGAGRWLVANERQYLNFSSNDYLGLSHHPQIIRAWQQGAERFGVGSGGSGHVSGYSVAHQALEEALAGWLGYSRALLFISGFAANQAVIAALMAKDDRIVADRLSHASLLEAANLSPATLRRFTHNDPQHLARLLDAPCGGQQLVVTEGIFSMDGDGAPLAEIHRAARQRNAWLLVDDAHGIGVTGDEGRGSCWRQQVKPELLIVTFGKGFGVSGAAILCSESVADYLLQFARHLIYSTSMPPAQAQALSAALAVIRSPEGADRREKLAALIQRFRSGVKASDFTLANSHSAIQPLIVGDNARALRLADTLREQGCWVSAIRPPTVPAGTARLRLTLTQAHEAQDIDRLLEVLDGAG.

R21 contributes to the substrate binding site. Residue 108–109 participates in pyridoxal 5'-phosphate binding; it reads GF. H133 serves as a coordination point for substrate. Pyridoxal 5'-phosphate-binding residues include S179, H207, and T233. An N6-(pyridoxal phosphate)lysine modification is found at K236. T352 provides a ligand contact to substrate.

Belongs to the class-II pyridoxal-phosphate-dependent aminotransferase family. BioF subfamily. Homodimer. Pyridoxal 5'-phosphate is required as a cofactor.

The catalysed reaction is 6-carboxyhexanoyl-[ACP] + L-alanine + H(+) = (8S)-8-amino-7-oxononanoate + holo-[ACP] + CO2. The protein operates within cofactor biosynthesis; biotin biosynthesis. In terms of biological role, catalyzes the decarboxylative condensation of pimeloyl-[acyl-carrier protein] and L-alanine to produce 8-amino-7-oxononanoate (AON), [acyl-carrier protein], and carbon dioxide. The protein is 8-amino-7-oxononanoate synthase of Citrobacter koseri (strain ATCC BAA-895 / CDC 4225-83 / SGSC4696).